Consider the following 36-residue polypeptide: Protein P4 (36 aa).

Residues 13 to 33 (GLQLSLLICACLLAVLIVSFC) form a helical membrane-spanning segment.

Its subcellular location is the host membrane. This chain is Protein P4, found in Vitis vinifera (Grape).